Reading from the N-terminus, the 78-residue chain is Small ribosomal subunit protein bS16c (78 aa).

This sequence belongs to the bacterial ribosomal protein bS16 family.

It localises to the plastid. Its subcellular location is the chloroplast. The protein is Small ribosomal subunit protein bS16c of Amborella trichopoda.